Here is a 325-residue protein sequence, read N- to C-terminus: Putative gluconeogenesis factor (325 aa).

The protein belongs to the gluconeogenesis factor family.

It localises to the cytoplasm. Functionally, required for morphogenesis under gluconeogenic growth conditions. This Streptococcus pyogenes serotype M3 (strain ATCC BAA-595 / MGAS315) protein is Putative gluconeogenesis factor.